We begin with the raw amino-acid sequence, 55 residues long: Trypsin inhibitor (55 aa).

The 55-residue stretch at 1-55 folds into the Kazal-like domain; it reads AHMDCTEFNPLCRCNKMLGDLICAVIGDAKEEHRNMCALCCEHPGGFEYSNGPCE. 4 disulfides stabilise this stretch: cysteine 5–cysteine 40, cysteine 12–cysteine 41, cysteine 14–cysteine 37, and cysteine 23–cysteine 54.

It localises to the secreted. Functionally, potent inhibitor of trypsin. The polypeptide is Trypsin inhibitor (Halocynthia roretzi (Sea squirt)).